A 1285-amino-acid polypeptide reads, in one-letter code: Tat-binding homolog 7 (1285 aa).

Disordered stretches follow at residues 1 to 95 (MARS…LTYR), 121 to 173 (MSDD…RTRR), 224 to 243 (GREEEEEGDEEEAESGEKEQ), and 258 to 359 (QEDE…ERGR). 2 stretches are compositionally biased toward acidic residues: residues 226 to 237 (EEEEEGDEEEAE) and 258 to 270 (QEDEESSNAESSE). Basic residues predominate over residues 311–325 (NRHHRNRNTSNRRRR). 446-453 (GPPGTGKT) is an ATP binding site. One can recognise a Bromo domain in the interval 928 to 1032 (ALQRQMRMFF…NTFRDAIDDM (105 aa)). The tract at residues 1100–1196 (EKLKEKLGIS…PTIQSSSSQE (97 aa)) is disordered. Basic residues predominate over residues 1136-1149 (KLNKKKKDQKRNKK). Acidic residues predominate over residues 1155–1175 (PDGDDTEETEEAVAENNVDAD).

This sequence belongs to the AAA ATPase family.

Functionally, thought to form a complex that enhances transcription from repetitive DNA sequences by modulating chromatin structure. The chain is Tat-binding homolog 7 from Caenorhabditis briggsae.